The sequence spans 338 residues: Anthranilate phosphoribosyltransferase (338 aa).

5-phospho-alpha-D-ribose 1-diphosphate is bound by residues Gly81, 84–85 (GD), Thr89, 91–94 (NIST), 109–117 (KHGNRAQSS), and Thr121. Residue Gly81 coordinates anthranilate. Ser93 lines the Mg(2+) pocket. Residue Asn112 coordinates anthranilate. Arg167 is an anthranilate binding site. Asp225 and Glu226 together coordinate Mg(2+).

It belongs to the anthranilate phosphoribosyltransferase family. Homodimer. Mg(2+) serves as cofactor.

The enzyme catalyses N-(5-phospho-beta-D-ribosyl)anthranilate + diphosphate = 5-phospho-alpha-D-ribose 1-diphosphate + anthranilate. Its pathway is amino-acid biosynthesis; L-tryptophan biosynthesis; L-tryptophan from chorismate: step 2/5. In terms of biological role, catalyzes the transfer of the phosphoribosyl group of 5-phosphorylribose-1-pyrophosphate (PRPP) to anthranilate to yield N-(5'-phosphoribosyl)-anthranilate (PRA). The protein is Anthranilate phosphoribosyltransferase of Rhizobium rhizogenes (strain K84 / ATCC BAA-868) (Agrobacterium radiobacter).